The following is a 237-amino-acid chain: Large ribosomal subunit protein uL3 (237 aa).

2 disordered regions span residues 133-155 (ASHG…DPGK) and 213-237 (PENA…EGAE). The segment covering 135 to 150 (HGNSITHRSHGSTGQR) has biased composition (polar residues). An N5-methylglutamine modification is found at Q151. Residues 220–237 (AGLRAGAKAEAAATEGAE) are compositionally biased toward low complexity.

The protein belongs to the universal ribosomal protein uL3 family. Part of the 50S ribosomal subunit. Forms a cluster with proteins L14 and L19. Post-translationally, methylated by PrmB.

Its function is as follows. One of the primary rRNA binding proteins, it binds directly near the 3'-end of the 23S rRNA, where it nucleates assembly of the 50S subunit. This is Large ribosomal subunit protein uL3 from Brucella suis biovar 1 (strain 1330).